The primary structure comprises 226 residues: Orotate phosphoribosyltransferase (226 aa).

Lysine 30 is a binding site for 5-phospho-alpha-D-ribose 1-diphosphate. Residue 38–39 (FF) coordinates orotate. 5-phospho-alpha-D-ribose 1-diphosphate contacts are provided by residues 76-77 (YK), arginine 106, lysine 107, lysine 110, histidine 112, and 132-140 (DDVMTAGTA). The orotate site is built by threonine 136 and arginine 164.

This sequence belongs to the purine/pyrimidine phosphoribosyltransferase family. PyrE subfamily. In terms of assembly, homodimer.

The catalysed reaction is orotidine 5'-phosphate + diphosphate = orotate + 5-phospho-alpha-D-ribose 1-diphosphate. The protein operates within pyrimidine metabolism; UMP biosynthesis via de novo pathway; UMP from orotate: step 1/2. Functionally, catalyzes the transfer of a ribosyl phosphate group from 5-phosphoribose 1-diphosphate to orotate, leading to the formation of orotidine monophosphate (OMP). This Kluyveromyces lactis (strain ATCC 8585 / CBS 2359 / DSM 70799 / NBRC 1267 / NRRL Y-1140 / WM37) (Yeast) protein is Orotate phosphoribosyltransferase (URA5).